The chain runs to 106 residues: UPF0145 protein CTC_01500 (106 aa).

The protein belongs to the UPF0145 family.

The polypeptide is UPF0145 protein CTC_01500 (Clostridium tetani (strain Massachusetts / E88)).